We begin with the raw amino-acid sequence, 246 residues long: tRNA (guanine-N(1)-)-methyltransferase (246 aa).

Residues Gly-117 and Ile-137 to Leu-142 each bind S-adenosyl-L-methionine.

It belongs to the RNA methyltransferase TrmD family. Homodimer.

Its subcellular location is the cytoplasm. The catalysed reaction is guanosine(37) in tRNA + S-adenosyl-L-methionine = N(1)-methylguanosine(37) in tRNA + S-adenosyl-L-homocysteine + H(+). Functionally, specifically methylates guanosine-37 in various tRNAs. The protein is tRNA (guanine-N(1)-)-methyltransferase of Acinetobacter baumannii (strain AB307-0294).